The chain runs to 259 residues: GEM-like protein 1 (259 aa).

Over residues 1-11 (MSGQENHDHGR) the composition is skewed to basic and acidic residues. The interval 1–79 (MSGQENHDHG…PSPAPRNTMD (79 aa)) is disordered. Residues 13–30 (SSTPAAASEPSKAAAHSS) are compositionally biased toward low complexity. The GRAM domain maps to 138–215 (KVFKQTFDCL…NQLKAVNPST (78 aa)).

The protein belongs to the GEM family. Interacts with AFH1.

This Arabidopsis thaliana (Mouse-ear cress) protein is GEM-like protein 1 (FIP1).